Consider the following 1310-residue polypeptide: Vacuolating cytotoxin autotransporter (1310 aa).

The N-terminal stretch at 1–30 (MEIQQTHRKINRPIISLALVGVLMGTELGA) is a signal peptide. A disordered region spans residues 339 to 364 (PEGGYESKTKDNPQNNPKNDAQKTEI). Polar residues predominate over residues 350 to 364 (NPQNNPKNDAQKTEI). The 273-residue stretch at 1038–1310 (KYEKPTNVWA…ASNLGMRYSF (273 aa)) folds into the Autotransporter domain.

Its subcellular location is the periplasm. The protein resides in the secreted. It localises to the cell surface. It is found in the cell outer membrane. Functionally, induces vacuolation of eukaryotic cells. Causes ulceration and gastric lesions. This chain is Vacuolating cytotoxin autotransporter (vacA), found in Helicobacter pylori (Campylobacter pylori).